A 605-amino-acid chain; its full sequence is Glutamine--fructose-6-phosphate aminotransferase [isomerizing] (605 aa).

Cysteine 2 (nucleophile; for GATase activity) is an active-site residue. In terms of domain architecture, Glutamine amidotransferase type-2 spans 2 to 219 (CGIVGVVGSK…DKELVVLTKD (218 aa)). SIS domains follow at residues 285-424 (IIKG…AEGE) and 457-595 (VADL…VDKP). The active-site For Fru-6P isomerization activity is the lysine 600.

As to quaternary structure, homodimer.

It is found in the cytoplasm. It catalyses the reaction D-fructose 6-phosphate + L-glutamine = D-glucosamine 6-phosphate + L-glutamate. In terms of biological role, catalyzes the first step in hexosamine metabolism, converting fructose-6P into glucosamine-6P using glutamine as a nitrogen source. This Lactococcus lactis subsp. lactis (strain IL1403) (Streptococcus lactis) protein is Glutamine--fructose-6-phosphate aminotransferase [isomerizing].